The sequence spans 521 residues: Bifunctional purine biosynthesis protein PurH (521 aa).

The 145-residue stretch at 1-145 folds into the MGS-like domain; it reads MIKQALISVS…KNHRDVTVVV (145 aa).

It belongs to the PurH family.

The catalysed reaction is (6R)-10-formyltetrahydrofolate + 5-amino-1-(5-phospho-beta-D-ribosyl)imidazole-4-carboxamide = 5-formamido-1-(5-phospho-D-ribosyl)imidazole-4-carboxamide + (6S)-5,6,7,8-tetrahydrofolate. It catalyses the reaction IMP + H2O = 5-formamido-1-(5-phospho-D-ribosyl)imidazole-4-carboxamide. It participates in purine metabolism; IMP biosynthesis via de novo pathway; 5-formamido-1-(5-phospho-D-ribosyl)imidazole-4-carboxamide from 5-amino-1-(5-phospho-D-ribosyl)imidazole-4-carboxamide (10-formyl THF route): step 1/1. The protein operates within purine metabolism; IMP biosynthesis via de novo pathway; IMP from 5-formamido-1-(5-phospho-D-ribosyl)imidazole-4-carboxamide: step 1/1. This chain is Bifunctional purine biosynthesis protein PurH, found in Burkholderia ambifaria (strain ATCC BAA-244 / DSM 16087 / CCUG 44356 / LMG 19182 / AMMD) (Burkholderia cepacia (strain AMMD)).